The primary structure comprises 97 residues: MALSLEEVRRIAVLARLRLSEEEERTFAGQLSAILDHVRQLEELDVTAVEPMTHALAAGELPARREDAVLPSLTPEEATAAAPAREGTAFKVPRIIE.

Positions 74-84 (TPEEATAAAPA) are enriched in low complexity. The tract at residues 74–97 (TPEEATAAAPAREGTAFKVPRIIE) is disordered.

This sequence belongs to the GatC family. Heterotrimer of A, B and C subunits.

The catalysed reaction is L-glutamyl-tRNA(Gln) + L-glutamine + ATP + H2O = L-glutaminyl-tRNA(Gln) + L-glutamate + ADP + phosphate + H(+). The enzyme catalyses L-aspartyl-tRNA(Asn) + L-glutamine + ATP + H2O = L-asparaginyl-tRNA(Asn) + L-glutamate + ADP + phosphate + 2 H(+). Allows the formation of correctly charged Asn-tRNA(Asn) or Gln-tRNA(Gln) through the transamidation of misacylated Asp-tRNA(Asn) or Glu-tRNA(Gln) in organisms which lack either or both of asparaginyl-tRNA or glutaminyl-tRNA synthetases. The reaction takes place in the presence of glutamine and ATP through an activated phospho-Asp-tRNA(Asn) or phospho-Glu-tRNA(Gln). This Anaeromyxobacter dehalogenans (strain 2CP-1 / ATCC BAA-258) protein is Aspartyl/glutamyl-tRNA(Asn/Gln) amidotransferase subunit C.